Reading from the N-terminus, the 493-residue chain is Vinyl phenol reductase (493 aa).

Residues Ala19, Glu38, Ser46, Thr50, Gly52, Ala156, Asp224, Asn448, and Val467 each contribute to the FAD site.

The protein belongs to the FAD-dependent oxidoreductase 2 family. FRD/SDH subfamily. FAD serves as cofactor.

It catalyses the reaction 4-vinylphenol + NADH + H(+) = 4-ethylphenol + NAD(+). It carries out the reaction 3,4-dihydroxystyrene + NADH + H(+) = 4-ethylcatechol + NAD(+). The catalysed reaction is 2-methoxy-4-vinylphenol + NADH + H(+) = 4-ethyl-2-methoxyphenol + NAD(+). Involved in the production of ethylphenols during the degradation of hydroxycinnamic acids. Catalyzes the reduction of vinylphenols (4-vinylphenol (4-hydroxystyrene), 4-vinylcatechol (3,4-dihydroxystyrene), and 4-vinylguaiacol (2-methoxy-4-vinylphenol)) to their corresponding ethylphenols (4-ethylphenol, 4-ethylcatechol, and 4-ethylguaiacol, respectively) in the presence of NADH. These compounds are considered the most important flavor components of fermented soy sauce, and, on the other hand, are considered off flavor and responsible for sensorial wine and cider alteration. The 4-ethylphenol produced by the gut bacteria L.plantarum strain WCFS1 can get subsequent sulfation to 4-ethylphenyl sulfate (4EPS) by host sulfotransferase (SULT1A1); 4EPS can enter the brain and seems to alter brain activity. Therefore, this enzyme likely plays a role in gut microbiota-host metabolic interactions. The chain is Vinyl phenol reductase from Lactiplantibacillus plantarum (strain ATCC BAA-793 / NCIMB 8826 / WCFS1) (Lactobacillus plantarum).